The sequence spans 179 residues: Archaemetzincin (179 aa).

Residue histidine 128 coordinates Zn(2+). The Proton acceptor role is filled by glutamate 129. Histidine 132, histidine 138, cysteine 139, cysteine 144, cysteine 163, and cysteine 166 together coordinate Zn(2+).

The protein belongs to the peptidase M54 family. Monomer. Requires Zn(2+) as cofactor.

Probable zinc metalloprotease whose natural substrate is unknown. In Methanocaldococcus jannaschii (strain ATCC 43067 / DSM 2661 / JAL-1 / JCM 10045 / NBRC 100440) (Methanococcus jannaschii), this protein is Archaemetzincin.